Reading from the N-terminus, the 136-residue chain is ATP synthase epsilon chain (136 aa).

The disordered stretch occupies residues 88–136 (DASSAESDLQAARNEVSKMEGQPASADKVKAQQSLDRARARVQAAKNQD).

It belongs to the ATPase epsilon chain family. In terms of assembly, F-type ATPases have 2 components, CF(1) - the catalytic core - and CF(0) - the membrane proton channel. CF(1) has five subunits: alpha(3), beta(3), gamma(1), delta(1), epsilon(1). CF(0) has three main subunits: a, b and c.

It localises to the cellular thylakoid membrane. Produces ATP from ADP in the presence of a proton gradient across the membrane. This chain is ATP synthase epsilon chain, found in Synechococcus sp. (strain WH7803).